The primary structure comprises 349 residues: Phosphate carrier protein, mitochondrial (349 aa).

3 Solcar repeats span residues 47-131 (KYFA…FKVQ), 144-229 (YRTF…TVEL), and 246-324 (EQLV…VKVW). A run of 6 helical transmembrane segments spans residues 48–68 (YFAL…TAVV), 108–128 (APTF…YEVF), 147–167 (FVYL…LSPL), 207–227 (PLWG…EKTV), 248–268 (LVVT…VSHP), and 304–324 (IIMI…VKVW).

It belongs to the mitochondrial carrier (TC 2.A.29) family.

The protein localises to the mitochondrion inner membrane. In terms of biological role, transport of phosphate groups from the cytosol to the mitochondrial matrix. The chain is Phosphate carrier protein, mitochondrial from Choristoneura fumiferana (Spruce budworm moth).